We begin with the raw amino-acid sequence, 434 residues long: Eukaryotic translation initiation factor 3 subunit E (434 aa).

Residues 219-392 (FFNHPKGRDL…GHVVMGTQPL (174 aa)) enclose the PCI domain.

It belongs to the eIF-3 subunit E family. As to quaternary structure, component of the eukaryotic translation initiation factor 3 (eIF-3) complex. The eIF-3 complex interacts with pix. Interacts with mxt.

The protein resides in the cytoplasm. Its function is as follows. Component of the eukaryotic translation initiation factor 3 (eIF-3) complex, which is involved in protein synthesis of a specialized repertoire of mRNAs and, together with other initiation factors, stimulates binding of mRNA and methionyl-tRNAi to the 40S ribosome. The eIF-3 complex specifically targets and initiates translation of a subset of mRNAs involved in cell proliferation. In Drosophila virilis (Fruit fly), this protein is Eukaryotic translation initiation factor 3 subunit E (eIF3-S6).